The following is a 203-amino-acid chain: GTP cyclohydrolase-2 (203 aa).

49–53 (RIHSE) is a GTP binding site. Zn(2+) is bound by residues Cys54, Cys65, and Cys67. Residues Gln70, 92 to 94 (EGR), and Thr114 contribute to the GTP site. The Proton acceptor role is filled by Asp126. The active-site Nucleophile is Arg128. GTP-binding residues include Thr149 and Lys154.

This sequence belongs to the GTP cyclohydrolase II family. Zn(2+) serves as cofactor.

The enzyme catalyses GTP + 4 H2O = 2,5-diamino-6-hydroxy-4-(5-phosphoribosylamino)-pyrimidine + formate + 2 phosphate + 3 H(+). Its pathway is cofactor biosynthesis; riboflavin biosynthesis; 5-amino-6-(D-ribitylamino)uracil from GTP: step 1/4. In terms of biological role, catalyzes the conversion of GTP to 2,5-diamino-6-ribosylamino-4(3H)-pyrimidinone 5'-phosphate (DARP), formate and pyrophosphate. The chain is GTP cyclohydrolase-2 from Shewanella sp. (strain W3-18-1).